We begin with the raw amino-acid sequence, 221 residues long: uncharacterized protein (221 aa).

The first 23 residues, 1-23, serve as a signal peptide directing secretion; the sequence is MNKLIQLALFFTLMLTGCSNSST. The interval 67–221 is disordered; the sequence is ELGKRKAKEE…QGYIDPEDAP (155 aa). The span at 68–150 shows a compositional bias: basic and acidic residues; sequence LGKRKAKEEA…EQKANAEKKR (83 aa). The stretch at 70 to 161 forms a coiled coil; that stretch reads KRKAKEEAEK…SQAQRQQTEA (92 aa). Polar residues predominate over residues 152–161; that stretch reads SQAQRQQTEA. The span at 162–174 shows a compositional bias: low complexity; that stretch reads PSSNSQDPPSSSS. The span at 175–184 shows a compositional bias: polar residues; sequence QTDKTIQQPA. The segment covering 195–205 has biased composition (basic and acidic residues); sequence YEERKKWHDDQ.

This is an uncharacterized protein from Bacillus subtilis (strain 168).